Reading from the N-terminus, the 178-residue chain is Bifunctional protein PyrR (178 aa).

Positions 97–109 match the PRPP-binding motif; sequence VVLVDDVLYTGRT.

The protein belongs to the purine/pyrimidine phosphoribosyltransferase family. PyrR subfamily.

The enzyme catalyses UMP + diphosphate = 5-phospho-alpha-D-ribose 1-diphosphate + uracil. Functionally, regulates the transcription of the pyrimidine nucleotide (pyr) operon in response to exogenous pyrimidines. Its function is as follows. Also displays a weak uracil phosphoribosyltransferase activity which is not physiologically significant. This Herpetosiphon aurantiacus (strain ATCC 23779 / DSM 785 / 114-95) protein is Bifunctional protein PyrR.